Reading from the N-terminus, the 231-residue chain is NADH-ubiquinone oxidoreductase chain 4 (231 aa).

7 helical membrane passes run 1–21 (PIAGSMVLAAILLKLGGYGMI), 34–54 (MFIPFITLSLWGAVLANLTCL), 62–82 (LIAYSSISHMGLVVAAISIQT), 86–106 (LSGAMALMIAHGFTSSALFCL), 118–138 (ILILTRGFHNILPMTTTWWLL), 169–189 (TIILLSLSILITSIYSLHIFL), and 211–231 (LLMTLHIIPLILLSMKPELVM).

The protein belongs to the complex I subunit 4 family.

The protein localises to the mitochondrion membrane. It catalyses the reaction a ubiquinone + NADH + 5 H(+)(in) = a ubiquinol + NAD(+) + 4 H(+)(out). Its function is as follows. Core subunit of the mitochondrial membrane respiratory chain NADH dehydrogenase (Complex I) that is believed to belong to the minimal assembly required for catalysis. Complex I functions in the transfer of electrons from NADH to the respiratory chain. The immediate electron acceptor for the enzyme is believed to be ubiquinone. This chain is NADH-ubiquinone oxidoreductase chain 4 (MT-ND4), found in Causus rhombeatus (Rhombic night adder).